A 277-amino-acid chain; its full sequence is Ras suppressor protein 1 (277 aa).

The disordered stretch occupies residues 1-24; the sequence is MSKSLKKLVEESREKNQPEVDMSD. S2 carries the post-translational modification N-acetylserine. A compositionally biased stretch (basic and acidic residues) spans 7–24; it reads KLVEESREKNQPEVDMSD. 7 LRR repeats span residues 41–63, 64–85, 87–109, 110–133, 135–156, 158–179, and 181–202; these read HITQ…AELK, NLEV…ISSL, KLKH…GSLP, ALEV…FFYL, TLRA…IGKL, KLQI…IGEL, and QLKE…LGNL. Positions 250 to 277 are disordered; it reads MQANPEPPKKNNDKSKKISRKPLAAKNR. Basic and acidic residues predominate over residues 256–265; that stretch reads PPKKNNDKSK.

Potentially plays a role in the Ras signal transduction pathway. Capable of suppressing v-Ras transformation in vitro. The protein is Ras suppressor protein 1 (RSU1) of Homo sapiens (Human).